We begin with the raw amino-acid sequence, 179 residues long: Large ribosomal subunit protein uL5 (179 aa).

This sequence belongs to the universal ribosomal protein uL5 family. In terms of assembly, part of the 50S ribosomal subunit; part of the 5S rRNA/L5/L18/L25 subcomplex. Contacts the 5S rRNA and the P site tRNA. Forms a bridge to the 30S subunit in the 70S ribosome.

Its function is as follows. This is one of the proteins that bind and probably mediate the attachment of the 5S RNA into the large ribosomal subunit, where it forms part of the central protuberance. In the 70S ribosome it contacts protein S13 of the 30S subunit (bridge B1b), connecting the 2 subunits; this bridge is implicated in subunit movement. Contacts the P site tRNA; the 5S rRNA and some of its associated proteins might help stabilize positioning of ribosome-bound tRNAs. In Photorhabdus laumondii subsp. laumondii (strain DSM 15139 / CIP 105565 / TT01) (Photorhabdus luminescens subsp. laumondii), this protein is Large ribosomal subunit protein uL5.